The chain runs to 61 residues: Probable tautomerase spyM18_1099 (61 aa).

The active-site Proton acceptor; via imino nitrogen is the Pro2.

This sequence belongs to the 4-oxalocrotonate tautomerase family.

The protein is Probable tautomerase spyM18_1099 of Streptococcus pyogenes serotype M18 (strain MGAS8232).